We begin with the raw amino-acid sequence, 350 residues long: Hydroxymethylglutaryl-CoA synthase (350 aa).

Residue E83 is the Proton donor/acceptor of the active site. The active-site Acyl-thioester intermediate is C115. 2 residues coordinate (3S)-3-hydroxy-3-methylglutaryl-CoA: C115 and T156. R204 is a CoA binding site. Positions 206 and 239 each coordinate (3S)-3-hydroxy-3-methylglutaryl-CoA. H239 serves as the catalytic Proton donor/acceptor. K244 serves as a coordination point for CoA. 2 residues coordinate (3S)-3-hydroxy-3-methylglutaryl-CoA: N271 and S301.

It belongs to the thiolase-like superfamily. Archaeal HMG-CoA synthase family. In terms of assembly, interacts with acetoacetyl-CoA thiolase that catalyzes the precedent step in the pathway and with a DUF35 protein. The acetoacetyl-CoA thiolase/HMG-CoA synthase complex channels the intermediate via a fused CoA-binding site, which allows for efficient coupling of the endergonic thiolase reaction with the exergonic HMGCS reaction.

It catalyses the reaction acetoacetyl-CoA + acetyl-CoA + H2O = (3S)-3-hydroxy-3-methylglutaryl-CoA + CoA + H(+). It participates in metabolic intermediate biosynthesis; (R)-mevalonate biosynthesis; (R)-mevalonate from acetyl-CoA: step 2/3. Functionally, catalyzes the condensation of acetyl-CoA with acetoacetyl-CoA to form 3-hydroxy-3-methylglutaryl-CoA (HMG-CoA). Functions in the mevalonate (MVA) pathway leading to isopentenyl diphosphate (IPP), a key precursor for the biosynthesis of isoprenoid compounds that are building blocks of archaeal membrane lipids. In Pyrococcus horikoshii (strain ATCC 700860 / DSM 12428 / JCM 9974 / NBRC 100139 / OT-3), this protein is Hydroxymethylglutaryl-CoA synthase.